The primary structure comprises 512 residues: FAD-linked oxidoreductase iacH (512 aa).

The signal sequence occupies residues 1–22; the sequence is MVSLKACVVAYGFTLLPALVSG. Asparagine 39, asparagine 55, asparagine 69, asparagine 210, asparagine 217, asparagine 278, asparagine 295, and asparagine 367 each carry an N-linked (GlcNAc...) asparagine glycan. Residues 77–248 enclose the FAD-binding PCMH-type domain; sequence LDTPDVQLVV…TSLEKKIYPG (172 aa).

This sequence belongs to the oxygen-dependent FAD-linked oxidoreductase family. Requires FAD as cofactor.

It participates in secondary metabolite biosynthesis. Functionally, FAD-linked oxidoreductase; part of the gene cluster that mediates the biosynthesis of iso-A82775C, a enylepoxycyclohexane and biosynthetic precursor of the chloropestolide anticancer natural products. Within the cluster, the prenyltransferase iacE prenylates siccayne to generate pestalodiol E, using dimethylallyl diphosphate (DMAPP) as cosubstrate. The probable oxidoreductase iacF is then involved in the epoxidation of pestalodiol F to pestalodiol F, which is further converted to pestalofone A by the short-chain dehydrogenase/reductase iacG. Iso-A82775C is subsequently generated from pestalofone A by the short-chain dehydrogenase/reductase iacC. Iso-A82775C is further condensed with maldoxin via a Diels-Alder reaction to produce the anticancer natural products chloropestolides A to E. This is FAD-linked oxidoreductase iacH from Pestalotiopsis fici (strain W106-1 / CGMCC3.15140).